Reading from the N-terminus, the 258-residue chain is MKQSPKIGILLMEGTNNETEVYYSVKRSGGSPDFIHINDLSAGRKRVSDYDGLIIPGGFSAGDYIRAGVIFAARLGAVAGKEIREFVDDGKPLIGICNGFQVLMEMGLIYDRSKITLTNNESNRFECRYTYMKMTSRNRIFQSGFYGKGVFQVPVAHAEGRIAVSERSVLKKLYENDQVVFKYSNENDVTDEYPWNPNGSIDSVASLSNEAGNVIGLMPHPERIYYRYQAMYLETEKDEVAGKIFYDSLVNYARDRNG.

One can recognise a Glutamine amidotransferase type-1 domain in the interval 7-238 (IGILLMEGTN…QAMYLETEKD (232 aa)). Cys-97 acts as the Nucleophile in catalysis. Catalysis depends on residues His-220 and Glu-222.

In terms of assembly, part of the FGAM synthase complex composed of 1 PurL, 1 PurQ and 2 PurS subunits.

It localises to the cytoplasm. It carries out the reaction N(2)-formyl-N(1)-(5-phospho-beta-D-ribosyl)glycinamide + L-glutamine + ATP + H2O = 2-formamido-N(1)-(5-O-phospho-beta-D-ribosyl)acetamidine + L-glutamate + ADP + phosphate + H(+). It catalyses the reaction L-glutamine + H2O = L-glutamate + NH4(+). Its pathway is purine metabolism; IMP biosynthesis via de novo pathway; 5-amino-1-(5-phospho-D-ribosyl)imidazole from N(2)-formyl-N(1)-(5-phospho-D-ribosyl)glycinamide: step 1/2. In terms of biological role, part of the phosphoribosylformylglycinamidine synthase complex involved in the purines biosynthetic pathway. Catalyzes the ATP-dependent conversion of formylglycinamide ribonucleotide (FGAR) and glutamine to yield formylglycinamidine ribonucleotide (FGAM) and glutamate. The FGAM synthase complex is composed of three subunits. PurQ produces an ammonia molecule by converting glutamine to glutamate. PurL transfers the ammonia molecule to FGAR to form FGAM in an ATP-dependent manner. PurS interacts with PurQ and PurL and is thought to assist in the transfer of the ammonia molecule from PurQ to PurL. The polypeptide is Phosphoribosylformylglycinamidine synthase subunit PurQ (Thermoplasma volcanium (strain ATCC 51530 / DSM 4299 / JCM 9571 / NBRC 15438 / GSS1)).